The chain runs to 499 residues: ALBINO3-like protein 1, chloroplastic (499 aa).

A chloroplast-targeting transit peptide spans 1–45; the sequence is MSSTISLKPTHLILSSFSTGKVLQFRRSRFSHTPSSSSSRYRTLV. The next 4 membrane-spanning stretches (helical) occupy residues 115-135, 184-204, 263-283, and 302-322; these read LSTV…TVLV, LAGI…PVWI, LAYL…IQIM, and LLPL…SLYW. The interval 378–499 is disordered; that stretch reads LKIPREKGGE…QQHSHETEKR (122 aa). Composition is skewed to basic and acidic residues over residues 379 to 420, 430 to 452, and 486 to 499; these read KIPR…RQKA, DKAH…KKTE, and HDTE…TEKR. The stretch at 397–436 forms a coiled coil; it reads GERFRLLKEQEAKRRREKEERQKAEAALSNQNTDKAHEQD.

It belongs to the OXA1/ALB3/YidC (TC 2.A.9.2) family. Homodimer. Interacts with ALB3. Interacts with STIC2. In terms of tissue distribution, highly expressed in green tissues.

It localises to the plastid. It is found in the chloroplast thylakoid membrane. Functionally, required for the insertion of some light harvesting chlorophyll-binding proteins (LHCP) into the chloroplast thylakoid membrane. Plays a role in the accumulation of some cytochrome b6f components in the thylakoid membrane. Required for the assembly and/or stability of the F(1)F(0) ATP synthase in chloroplast thylakoid membranes. Functions to stabilize or promote assembly of F(1) during its attachment to the membrane-embedded F(0) part. Participates with STIC2 in thylakoid protein targeting. May function with a specific subset of thylakoidal proteins. The chain is ALBINO3-like protein 1, chloroplastic from Arabidopsis thaliana (Mouse-ear cress).